Consider the following 235-residue polypeptide: 1-Cys peroxiredoxin (235 aa).

Residues 5–179 (ILLGDKFPDF…ILRVVDSLQL (175 aa)) enclose the Thioredoxin domain. The active site involves Cys49. Cys49 serves as the catalytic Cysteine sulfenic acid (-SOH) intermediate.

It belongs to the peroxiredoxin family. Prx6 subfamily.

The protein localises to the cytoplasm. The enzyme catalyses a hydroperoxide + [protein]-dithiol = [protein]-disulfide + an alcohol + H2O. Its function is as follows. Thiol-specific peroxidase that catalyzes the reduction of hydrogen peroxide and organic hydroperoxides to water and alcohols, respectively. Plays a role in cell protection against oxidative stress by detoxifying peroxides. This is 1-Cys peroxiredoxin from Dirofilaria immitis (Canine heartworm).